The primary structure comprises 663 residues: Syntabulin (663 aa).

Disordered stretches follow at residues 1–202 and 216–267; these read MGPL…PREK and VNIH…PEQY. The tract at residues 2-417 is sufficient for interaction with KIF5B; it reads GPLRESKKEH…DTMADGLSLE (416 aa). A Phosphoserine modification is found at Ser-50. A compositionally biased stretch (low complexity) spans 57 to 73; it reads FNPSSSGRSARTVSSNS. The segment covering 81–97 has biased composition (polar residues); it reads CPSSQSVSPVKTPSDAG. Phosphoserine is present on Ser-107. Composition is skewed to low complexity over residues 145 to 158, 188 to 198, and 221 to 241; these read EADFSSSSSTGSIS, SSHKPGSSPSS, and SYAPSSPSSSNSGSYKGSDCS. The stretch at 271–353 forms a coiled coil; that stretch reads LQQKEVTVRH…MRSSLADKDK (83 aa). Residues 310-417 are sufficient for interaction with STX1A; the sequence is REDWIEEECH…DTMADGLSLE (108 aa). Phosphoserine occurs at positions 396 and 555. A helical transmembrane segment spans residues 606–626; that stretch reads SFLVDLLAVAAPVVPTVLWAF.

In terms of assembly, interacts with STX1A and KIF5B. In terms of tissue distribution, isoform 3, isoform 4 and isoform 5 are expressed in HeLa cell line (at protein level). Isoform 3 is expressed in fetal and adult brain. Isoform 4 is expressed in numerous fetal tissues (brain, kidney, liver, lung, and thymus) and in adult brain, kidney, liver, lung, pancreas, colon, prostate, small intestine, testis and thymus. Isoform 5 is expressed in fetal brain, brain and small intestine.

The protein localises to the cytoplasm. It is found in the cytoskeleton. The protein resides in the cytoplasmic vesicle. It localises to the golgi apparatus membrane. In terms of biological role, part of a kinesin motor-adapter complex that is critical for the anterograde axonal transport of active zone components and contributes to activity-dependent presynaptic assembly during neuronal development. The protein is Syntabulin (SYBU) of Homo sapiens (Human).